The sequence spans 427 residues: Flotillin-1 (427 aa).

A phosphoserine mark is found at serine 19, serine 163, and serine 385. Residue threonine 387 is modified to Phosphothreonine.

It belongs to the band 7/mec-2 family. Flotillin subfamily. In terms of assembly, heterooligomeric complex of flotillin-1 and flotillin-2 and caveolin-1 and caveolin-2. Interacts with ECPAS.

The protein localises to the cell membrane. It is found in the endosome. The protein resides in the membrane. Its subcellular location is the caveola. It localises to the melanosome. The protein localises to the membrane raft. May act as a scaffolding protein within caveolar membranes, functionally participating in formation of caveolae or caveolae-like vesicles. This is Flotillin-1 (FLOT1) from Pongo abelii (Sumatran orangutan).